We begin with the raw amino-acid sequence, 543 residues long: Reticulophagy regulator 2 (543 aa).

3 helical membrane passes run 12 to 32 (AGGG…SLGM), 100 to 120 (SLRP…LDLW), and 204 to 224 (VPGI…PLVV). A compositionally biased stretch (basic residues) spans 254–265 (LHHKHDKRKRQG). Residues 254 to 287 (LHHKHDKRKRQGKNAPPGGDEPLAETESESEAEL) form a disordered region. The span at 275–285 (PLAETESESEA) shows a compositional bias: acidic residues. Thr279 is subject to Phosphothreonine. A phosphoserine mark is found at Ser281, Ser283, Ser291, and Ser311. Residue Thr334 is modified to Phosphothreonine. 2 disordered regions span residues 336-394 (VSED…DVAA) and 411-486 (HFNG…EEEA). A phosphoserine mark is found at Ser337, Ser344, Ser347, and Ser385. Positions 461 to 480 (APSPSILPPVPQDSPQPLPA) are enriched in pro residues. The short motif at 490–495 (EDFELL) is the LIR motif element. Residues 504 to 543 (NAELGLEPETPPKPPDAPPLGPDIHSLVQSDQEAQAVAEP) form a disordered region. Over residues 512 to 524 (ETPPKPPDAPPLG) the composition is skewed to pro residues.

This sequence belongs to the RETREG family. As to quaternary structure, interacts with ATG8 family modifier proteins MAP1LC3A, MAP1LC3B, MAP1LC3C, GABARAP, GABARAPL1 and GABARAPL2. Shows higher affinity for GABARAPL1 than for MAP1LC3B. Interacts with CANX.

It is found in the endoplasmic reticulum membrane. In terms of biological role, endoplasmic reticulum (ER)-anchored autophagy regulator which exists in an inactive state under basal conditions but is activated following cellular stress. When activated, induces ER fragmentation and mediates ER delivery into lysosomes through sequestration into autophagosomes via interaction with ATG8 family proteins. Required for collagen quality control in a LIR motif-independent manner. The chain is Reticulophagy regulator 2 from Homo sapiens (Human).